The chain runs to 146 residues: Hemoglobin subunit beta (146 aa).

The region spanning 2-146 is the Globin domain; sequence HWTAEEKQLI…VAHALARKYH (145 aa). Residues His63 and His92 each coordinate heme b.

This sequence belongs to the globin family. As to quaternary structure, heterotetramer of two alpha chains and two beta chains. Red blood cells.

Functionally, involved in oxygen transport from the lung to the various peripheral tissues. This is Hemoglobin subunit beta (HBB) from Chloephaga melanoptera (Andean goose).